The following is a 59-amino-acid chain: Large ribosomal subunit protein uL30 (59 aa).

This sequence belongs to the universal ribosomal protein uL30 family. Part of the 50S ribosomal subunit.

This chain is Large ribosomal subunit protein uL30, found in Staphylococcus saprophyticus subsp. saprophyticus (strain ATCC 15305 / DSM 20229 / NCIMB 8711 / NCTC 7292 / S-41).